A 383-amino-acid chain; its full sequence is Embryonic pepsinogen (383 aa).

The first 16 residues, 1 to 16 (MRSLALLCAVLALSDG), serve as a signal peptide directing secretion. The 305-residue stretch at 76-380 (YYGTISIGTP…DRANNRVGLA (305 aa)) folds into the Peptidase A1 domain. Residue D94 is part of the active site. C107 and C112 are joined by a disulfide. 2 N-linked (GlcNAc...) asparagine glycosylation sites follow: N132 and N204. Residues C267 and C271 are joined by a disulfide bond. D276 is a catalytic residue. N-linked (GlcNAc...) asparagine glycosylation is present at N309. C310 and C344 form a disulfide bridge. N350 carries an N-linked (GlcNAc...) asparagine glycan.

It belongs to the peptidase A1 family.

In Gallus gallus (Chicken), this protein is Embryonic pepsinogen.